The sequence spans 456 residues: Cysteine--tRNA ligase (456 aa).

Residue C29 participates in Zn(2+) binding. A 'HIGH' region motif is present at residues 31–41 (PTVYDYAHVGN). 3 residues coordinate Zn(2+): C209, H234, and E238. Residues 267–271 (KMSKS) carry the 'KMSKS' region motif. K270 lines the ATP pocket.

This sequence belongs to the class-I aminoacyl-tRNA synthetase family. Monomer. Requires Zn(2+) as cofactor.

It is found in the cytoplasm. It carries out the reaction tRNA(Cys) + L-cysteine + ATP = L-cysteinyl-tRNA(Cys) + AMP + diphosphate. In Rhodospirillum centenum (strain ATCC 51521 / SW), this protein is Cysteine--tRNA ligase.